The primary structure comprises 1063 residues: MDTASVTGGEHKGKEKTCRVCGEEVAAREDGKPFVACAECGFPVCKPCYEYERSEGTQCCPQCNTRYKRHKGCPRVEGDEDDGGDMDDFEEEFQIKSPTKQKPPHEPVNFDVYSENGEQPAQKWRPGGPALSSFTGSVAGKDLEQEREMEGGMEWKDRIDKWKTKQEKRGKLNRDDSDDDDDKNDDEYMLLAEARQPLWRKVPIPSSKINPYRIVIVLRLVVLCFFLKFRITTPAMDAVPLWLASVICELWFALSWILDQLPKWSPVTRETYLDRLALRYERDGEPCRLAPIDFFVSTVDPLKEPPIITANTVLSILAVDYPVDRVSCYVSDDGASMLLFDTLSETAEFARRWVPFCKKFTIEPRAPEFYFSQKIDYLKDKVQPTFVKERRAMKREYEEFKVRINALVAKAQKKPEEGWVMQDGTPWPGNNTRDHPGMIQVYLGSQGALDVEGSELPRLVYVSREKRPGYNHHKKAGAMNSLVRVSAVLTNAPFILNLDCDHYVNNSKAVREAMCFLMDKQLGKKLCYVQFPQRFDGIDRHDRYANRNTVFFDINMKGLDGIQGPVYVGTGTVFNRQALYGYDPPRPEKRPKMTCDCWPSWCCCCCCFGGGKRGKSHKNKKGGGGGEGGGLDEPRRGLLGFYKKRSKKDKLGGGAASLAGGKKGYRKHQRGFELEEIEEGLEGYDELERSSLMSQKSFEKRFGQSPVFIASTLVEDGGLPQGAAADPAALIKEAIHVISCGYEEKTEWGKEIGWIYGSVTEDILTGFKMHCRGWKSVYCTPARAAFKGSAPINLSDRLHQVLRWALGSVEIFMSRHCPLWYAYGGRLKWLERFAYTNTIVYPFTSIPLLAYCTIPAVCLLTGKFIIPTLNNLASIWFIALFLSIIATGVLELRWSGVSIEDWWRNEQFWVIGGVSAHLFAVFQGLLKVLGGVDTNFTVTSKAAADETDAFGELYLFKWTTLLVPPTTLIIINMVGIVAGVSDAVNNGYGSWGPLFGKLFFSFWVILHLYPFLKGLMGRQNRTPTIVVLWSILLASIFSLVWVRIDPFIPKPKGPVLKPCGVSC.

The Cytoplasmic segment spans residues 1–213; it reads MDTASVTGGE…IPSSKINPYR (213 aa). Residues C18, C21, C37, C40, C45, C48, C60, and C63 each contribute to the Zn(2+) site. An RING-type; degenerate zinc finger spans residues 18-64; the sequence is CRVCGEEVAAREDGKPFVACAECGFPVCKPCYEYERSEGTQCCPQCN. Positions 116–154 are disordered; sequence NGEQPAQKWRPGGPALSSFTGSVAGKDLEQEREMEGGME. Over residues 141–154 the composition is skewed to basic and acidic residues; it reads KDLEQEREMEGGME. Residues 214 to 234 form a helical membrane-spanning segment; it reads IVIVLRLVVLCFFLKFRITTP. Over 235–237 the chain is Extracellular; sequence AMD. Residues 238 to 258 traverse the membrane as a helical segment; it reads AVPLWLASVICELWFALSWIL. Topologically, residues 259–845 are cytoplasmic; that stretch reads DQLPKWSPVT…TNTIVYPFTS (587 aa). The UDP-alpha-D-glucose site is built by S297, K303, E304, and D333. D333 is an active-site residue. Positions 387–414 form a coiled coil; that stretch reads VKERRAMKREYEEFKVRINALVAKAQKK. K474 lines the UDP-alpha-D-glucose pocket. 2 residues coordinate Mn(2+): K475 and D499. The active site involves D762. Residues 846-866 traverse the membrane as a helical segment; it reads IPLLAYCTIPAVCLLTGKFII. The Extracellular portion of the chain corresponds to 867–871; it reads PTLNN. A helical transmembrane segment spans residues 872 to 892; it reads LASIWFIALFLSIIATGVLEL. The Cytoplasmic portion of the chain corresponds to 893-907; that stretch reads RWSGVSIEDWWRNEQ. The helical transmembrane segment at 908-928 threads the bilayer; that stretch reads FWVIGGVSAHLFAVFQGLLKV. Topologically, residues 929-959 are extracellular; the sequence is LGGVDTNFTVTSKAAADETDAFGELYLFKWT. N935 is a glycosylation site (N-linked (GlcNAc...) asparagine). Residues 960–980 traverse the membrane as a helical segment; it reads TLLVPPTTLIIINMVGIVAGV. The Cytoplasmic portion of the chain corresponds to 981–991; the sequence is SDAVNNGYGSW. A helical transmembrane segment spans residues 992–1012; that stretch reads GPLFGKLFFSFWVILHLYPFL. Topologically, residues 1013–1021 are extracellular; it reads KGLMGRQNR. The helical transmembrane segment at 1022 to 1042 threads the bilayer; sequence TPTIVVLWSILLASIFSLVWV. At 1043 to 1063 the chain is on the cytoplasmic side; that stretch reads RIDPFIPKPKGPVLKPCGVSC.

It belongs to the glycosyltransferase 2 family. Plant cellulose synthase subfamily. It depends on Mn(2+) as a cofactor. The cofactor is Zn(2+).

It is found in the cell membrane. It carries out the reaction [(1-&gt;4)-beta-D-glucosyl](n) + UDP-alpha-D-glucose = [(1-&gt;4)-beta-D-glucosyl](n+1) + UDP + H(+). The protein operates within glycan metabolism; plant cellulose biosynthesis. Catalytic subunit of cellulose synthase terminal complexes ('rosettes'), required for beta-1,4-glucan microfibril crystallization, a major mechanism of the cell wall formation. Involved in the secondary cell wall formation. This chain is Cellulose synthase A catalytic subunit 7 [UDP-forming] (CESA7), found in Oryza sativa subsp. japonica (Rice).